The following is a 301-amino-acid chain: Ornithine carbamoyltransferase (301 aa).

Residues 47–50 (STRT), Gln74, Arg98, and 125–128 (HPCQ) contribute to the carbamoyl phosphate site. L-ornithine-binding positions include Asn156, Asp220, and 224–225 (SM). Residues 260 to 261 (CL) and Arg288 each bind carbamoyl phosphate.

The protein belongs to the aspartate/ornithine carbamoyltransferase superfamily. OTCase family.

The protein localises to the cytoplasm. The enzyme catalyses carbamoyl phosphate + L-ornithine = L-citrulline + phosphate + H(+). It functions in the pathway amino-acid biosynthesis; L-arginine biosynthesis; L-arginine from L-ornithine and carbamoyl phosphate: step 1/3. In terms of biological role, reversibly catalyzes the transfer of the carbamoyl group from carbamoyl phosphate (CP) to the N(epsilon) atom of ornithine (ORN) to produce L-citrulline. This Methanobrevibacter smithii (strain ATCC 35061 / DSM 861 / OCM 144 / PS) protein is Ornithine carbamoyltransferase.